The primary structure comprises 210 residues: Large ribosomal subunit protein uL22 (210 aa).

Residues 123-210 (NEMTSKETVK…TKSTKKEGSK (88 aa)) form a disordered region. Basic and acidic residues predominate over residues 126–157 (TSKETVKEPAKKPSAKVEKPAEAKAPKQETST). A compositionally biased stretch (low complexity) spans 158 to 185 (KKPTTTTESKPKTSKAPAQKQAAKVAKP).

This sequence belongs to the universal ribosomal protein uL22 family. As to quaternary structure, part of the 50S ribosomal subunit.

In terms of biological role, this protein binds specifically to 23S rRNA; its binding is stimulated by other ribosomal proteins, e.g. L4, L17, and L20. It is important during the early stages of 50S assembly. It makes multiple contacts with different domains of the 23S rRNA in the assembled 50S subunit and ribosome. Its function is as follows. The globular domain of the protein is located near the polypeptide exit tunnel on the outside of the subunit, while an extended beta-hairpin is found that lines the wall of the exit tunnel in the center of the 70S ribosome. This chain is Large ribosomal subunit protein uL22, found in Metamycoplasma arthritidis (strain 158L3-1) (Mycoplasma arthritidis).